The primary structure comprises 147 residues: Large ribosomal subunit protein bL9 (147 aa).

It belongs to the bacterial ribosomal protein bL9 family.

In terms of biological role, binds to the 23S rRNA. The protein is Large ribosomal subunit protein bL9 of Bacteroides fragilis (strain YCH46).